Here is a 127-residue protein sequence, read N- to C-terminus: Protein ApaG (127 aa).

The 125-residue stretch at 3–127 (DTNKYRIEVQ…FVLASPRALH (125 aa)) folds into the ApaG domain.

This chain is Protein ApaG, found in Dechloromonas aromatica (strain RCB).